The sequence spans 65 residues: U11-theraphotoxin-Cg1b (65 aa).

The first 21 residues, 1–21 (MKTTILVVILGLTLLFALSAA), serve as a signal peptide directing secretion. The propeptide occupies 22–29 (TELKDEER). 3 cysteine pairs are disulfide-bonded: C31–C45, C38–C50, and C44–C57.

This sequence belongs to the neurotoxin 10 (Hwtx-1) family. 32 (Jztx-16) subfamily. As to expression, expressed by the venom gland.

The protein localises to the secreted. Functionally, probable ion channel inhibitor. This is U11-theraphotoxin-Cg1b from Chilobrachys guangxiensis (Chinese earth tiger tarantula).